The primary structure comprises 291 residues: NAD kinase (291 aa).

Residue Asp73 is the Proton acceptor of the active site. Residues 73–74 (DG), 147–148 (ND), Arg175, Asp177, and Gln246 contribute to the NAD(+) site.

It belongs to the NAD kinase family. It depends on a divalent metal cation as a cofactor.

The protein resides in the cytoplasm. The catalysed reaction is NAD(+) + ATP = ADP + NADP(+) + H(+). In terms of biological role, involved in the regulation of the intracellular balance of NAD and NADP, and is a key enzyme in the biosynthesis of NADP. Catalyzes specifically the phosphorylation on 2'-hydroxyl of the adenosine moiety of NAD to yield NADP. The protein is NAD kinase of Laribacter hongkongensis (strain HLHK9).